The following is a 3470-amino-acid chain: Dynein axonemal heavy chain 5 (3470 aa).

The tract at residues 1–1938 (MFRIGRRQLW…MIHITDVAFT (1938 aa)) is stem. The segment at 899-918 (EKVRHENASPNGDTSGGGEG) is disordered. AAA stretches follow at residues 1939–2161 (YQNE…VLRT), 2221–2440 (TAIS…IQNL), 2547–2800 (VYPP…IWQG), and 2913–3167 (LYNE…FRRS). ATP-binding positions include 1977 to 1984 (GPAGTGKT) and 2259 to 2266 (GPSGSGKT). Coiled-coil stretches lie at residues 3207 to 3241 (LKEA…VLKE) and 3434 to 3468 (HALA…AMTE).

This sequence belongs to the dynein heavy chain family. Interacts with DNAL1. Consists of at least two heavy chains and a number of intermediate and light chains.

The protein resides in the cytoplasm. The protein localises to the cytoskeleton. Its subcellular location is the cilium axoneme. Its function is as follows. Force generating protein of respiratory cilia. Produces force towards the minus ends of microtubules. Dynein has ATPase activity; the force-producing power stroke is thought to occur on release of ADP. Required for structural and functional integrity of the cilia of ependymal cells lining the brain ventricles. The polypeptide is Dynein axonemal heavy chain 5 (Rattus norvegicus (Rat)).